We begin with the raw amino-acid sequence, 88 residues long: Phosphocarrier protein HPr (88 aa).

Residues 1 to 88 (MEQNSYVIID…DVLSKEGLTK (88 aa)) form the HPr domain. Residue H15 is the Pros-phosphohistidine intermediate of the active site. S46 is subject to Phosphoserine; by HPrK/P.

Its subcellular location is the cytoplasm. Its activity is regulated as follows. Phosphorylation on Ser-46 inhibits the phosphoryl transfer from enzyme I to HPr. Its function is as follows. General (non sugar-specific) component of the phosphoenolpyruvate-dependent sugar phosphotransferase system (sugar PTS). This major carbohydrate active-transport system catalyzes the phosphorylation of incoming sugar substrates concomitantly with their translocation across the cell membrane. The phosphoryl group from phosphoenolpyruvate (PEP) is transferred to the phosphoryl carrier protein HPr by enzyme I. Phospho-HPr then transfers it to the PTS EIIA domain. Functionally, P-Ser-HPr interacts with the catabolite control protein A (CcpA), forming a complex that binds to DNA at the catabolite response elements cre, operator sites preceding a large number of catabolite-regulated genes. Thus, P-Ser-HPr is a corepressor in carbon catabolite repression (CCR), a mechanism that allows bacteria to coordinate and optimize the utilization of available carbon sources. P-Ser-HPr also plays a role in inducer exclusion, in which it probably interacts with several non-PTS permeases and inhibits their transport activity. The polypeptide is Phosphocarrier protein HPr (ptsH) (Staphylococcus aureus (strain MSSA476)).